Consider the following 297-residue polypeptide: Flavin-dependent thymidylate synthase (297 aa).

Residues 41-251 enclose the ThyX domain; it reads GFVRLVDYMG…PLTYAAFVEY (211 aa). Residues Thr87, 110–112, and Glu118 contribute to the FAD site; that span reads RHR. Residues 107 to 110, 118 to 122, and Arg190 contribute to the dUMP site; these read QWVR and EYSAR. The ThyX motif motif lies at 110-120; it reads RHRTANVNEYS. Residues 206–208 and His212 contribute to the FAD site; that span reads DLH. DUMP is bound at residue Arg217. Residue Arg217 is the Involved in ionization of N3 of dUMP, leading to its activation of the active site.

This sequence belongs to the thymidylate synthase ThyX family. Homotetramer. It depends on FAD as a cofactor.

The catalysed reaction is dUMP + (6R)-5,10-methylene-5,6,7,8-tetrahydrofolate + NADPH + H(+) = dTMP + (6S)-5,6,7,8-tetrahydrofolate + NADP(+). The protein operates within pyrimidine metabolism; dTTP biosynthesis. Catalyzes the reductive methylation of 2'-deoxyuridine-5'-monophosphate (dUMP) to 2'-deoxythymidine-5'-monophosphate (dTMP) while utilizing 5,10-methylenetetrahydrofolate (mTHF) as the methyl donor, and NADPH and FADH(2) as the reductant. The chain is Flavin-dependent thymidylate synthase from Ehrlichia ruminantium (strain Gardel).